Reading from the N-terminus, the 352-residue chain is Bifunctional protein FolD 1, mitochondrial (352 aa).

The transit peptide at 1 to 23 (MLMIARKALASAHTKAFRLATRD) directs the protein to the mitochondrion.

The protein belongs to the tetrahydrofolate dehydrogenase/cyclohydrolase family. As to quaternary structure, homodimer.

The protein resides in the mitochondrion. It catalyses the reaction (6R)-5,10-methylene-5,6,7,8-tetrahydrofolate + NADP(+) = (6R)-5,10-methenyltetrahydrofolate + NADPH. It carries out the reaction (6R)-5,10-methenyltetrahydrofolate + H2O = (6R)-10-formyltetrahydrofolate + H(+). It participates in one-carbon metabolism; tetrahydrofolate interconversion. Catalyzes the oxidation of 5,10-methylenetetrahydrofolate to 5,10-methenyltetrahydrofolate and then the hydrolysis of 5,10-methenyltetrahydrofolate to 10-formyltetrahydrofolate. This is Bifunctional protein FolD 1, mitochondrial (FOLD1) from Arabidopsis thaliana (Mouse-ear cress).